An 86-amino-acid polypeptide reads, in one-letter code: Small ribosomal subunit protein uS15 (86 aa).

Residues 1–22 are disordered; it reads MSVDTQKVIEDNKRSAQDTGSP. The span at 7–16 shows a compositional bias: basic and acidic residues; that stretch reads KVIEDNKRSA.

The protein belongs to the universal ribosomal protein uS15 family. Part of the 30S ribosomal subunit. Forms a bridge to the 50S subunit in the 70S ribosome, contacting the 23S rRNA.

In terms of biological role, one of the primary rRNA binding proteins, it binds directly to 16S rRNA where it helps nucleate assembly of the platform of the 30S subunit by binding and bridging several RNA helices of the 16S rRNA. Functionally, forms an intersubunit bridge (bridge B4) with the 23S rRNA of the 50S subunit in the ribosome. The chain is Small ribosomal subunit protein uS15 from Xanthomonas campestris pv. campestris (strain 8004).